The chain runs to 676 residues: UvrABC system protein C (676 aa).

The GIY-YIG domain occupies 16 to 95; it reads VEPGVYRFRD…IKEFDPRFNI (80 aa). In terms of domain architecture, UVR spans 208–243; that stretch reads DRLVRDLERKMTAAAEDLDFERAARLRDDIGALRRA.

Belongs to the UvrC family. As to quaternary structure, interacts with UvrB in an incision complex.

The protein resides in the cytoplasm. In terms of biological role, the UvrABC repair system catalyzes the recognition and processing of DNA lesions. UvrC both incises the 5' and 3' sides of the lesion. The N-terminal half is responsible for the 3' incision and the C-terminal half is responsible for the 5' incision. This chain is UvrABC system protein C, found in Mycobacterium sp. (strain KMS).